The following is a 146-amino-acid chain: Large ribosomal subunit protein uL15 (146 aa).

A disordered region spans residues 1 to 46; that stretch reads MKLHELQPAPGSRKKAVRVGRGIGSGNGKTAGRGHKGQKARSGGGV. Positions 21 to 31 are enriched in gly residues; it reads RGIGSGNGKTA.

Belongs to the universal ribosomal protein uL15 family. Part of the 50S ribosomal subunit.

Functionally, binds to the 23S rRNA. This is Large ribosomal subunit protein uL15 from Geobacillus thermodenitrificans (strain NG80-2).